Consider the following 54-residue polypeptide: SPbeta prophage-derived uncharacterized protein YoqE (54 aa).

This Bacillus subtilis (strain 168) protein is SPbeta prophage-derived uncharacterized protein YoqE (yoqE).